A 378-amino-acid chain; its full sequence is Calponin homolog OV9M (378 aa).

A compositionally biased stretch (low complexity) spans 1–20 (MPAQPAQENAQDADDAQANA). Residues 1–35 (MPAQPAQENAQDADDAQANATMETRVAGQGQPKRV) are disordered. 7 Calponin-like repeats span residues 50 to 75 (IPSQ…RNTQ), 98 to 123 (VRLQ…RDVC), 151 to 176 (VRLQ…RRET), 197 to 222 (IPLQ…RRET), 244 to 269 (IPSQ…RWEV), 285 to 310 (VRLQ…RNTT), and 330 to 355 (IPSQ…RDVK). Positions 175–194 (ETTKMTDSKHPDYDHERPDQ) are disordered. Residues 230–256 (HPEYDPESSIDSSTIPSQMGSNKYASQ) form a disordered region. A compositionally biased stretch (polar residues) spans 238–256 (SIDSSTIPSQMGSNKYASQ). Positions 331 to 352 (PSQAGWNRGDSQKGMTGFGAPR) are disordered.

It belongs to the calponin family. Found in the longitudinal muscles below the hypodermis.

Functionally, could be involved in muscle contraction. The chain is Calponin homolog OV9M from Onchocerca volvulus.